A 450-amino-acid chain; its full sequence is MIQLFDYYNQETQDLHDSLLAAGYACPTIVIEANGFLPDDMISPYTYFLGDEEGVDHPLFFNQVPVPPFWEITGDHQVARVSDMGEERARIHYASQARGRLVKQVDWLDKKGQLRLSERYNKQGRCFAKTAYKSGQEAFNTTYYSTDGQERIVENHVTGDIILTLDQEPLRIFKSRVDFIRFFLERLDLDLDHILFNSLAYSFLVSHSLTGRAGQDILFWQEPLYDELPGNMQLILDNSQLRTQTIVIPDLATYEKAMSLAAADQQQKFLHLGYHYDFKRDNYLRKDALILTHSDQIEGLDTLVQSLPQLVFRIAALTEMSPKLLSMLSYKNVVLYQNASLKQIEQLYLESDIYLDINHGGQVLQAVRKAFENNLLILGFEQTLHDRHYIAQQHIFDSSQPAQLASILEEALCGVEQMRSALQAQGRHANDVPVSLYQETLQSLLGGQHG.

Belongs to the GtfB family. As to quaternary structure, forms a heterotetramer with 2 subunits each of GtfA and GtfB. Part of the accessory SecA2/SecY2 protein translocation apparatus required to export cell wall protein GspB.

The protein localises to the cell membrane. The protein operates within protein modification; protein glycosylation. Its function is as follows. Required for polymorphic O-glycosylation of GspB, a serine-rich repeat cell wall protein encoded upstream in the same operon. A substrate-binding protein that is part of the accessory SecA2/SecY2 system specifically required to export GspB. The GtfA-GtfB complex adds GlcNAc from UDP-GlcNAc to GspB, attaching the first sugar residue. Upon coexpression in E.coli with GtfA glycosylates GspB constructs. Binds the GspB protein substrate; alone this subunit only recognizes partially glycosylated GspB, but is constrained by GtfA to also recognize unglycosylated protein. The enzyme probably modifies its tertiary conformation by opening and closing its intersubunit interfaces to accomodate the increasingly glycosylated substrate. This is UDP-N-acetylglucosamine--peptide N-acetylglucosaminyltransferase stabilizing protein GtfB from Streptococcus gordonii.